Consider the following 441-residue polypeptide: Enolase (441 aa).

A (2R)-2-phosphoglycerate-binding site is contributed by Gln164. Glu206 (proton donor) is an active-site residue. Residues Asp243, Glu289, and Asp316 each contribute to the Mg(2+) site. (2R)-2-phosphoglycerate contacts are provided by Lys341, Arg370, Ser371, and Lys392. Lys341 functions as the Proton acceptor in the catalytic mechanism.

It belongs to the enolase family. Mg(2+) serves as cofactor.

It is found in the cytoplasm. It localises to the secreted. Its subcellular location is the cell surface. The catalysed reaction is (2R)-2-phosphoglycerate = phosphoenolpyruvate + H2O. Its pathway is carbohydrate degradation; glycolysis; pyruvate from D-glyceraldehyde 3-phosphate: step 4/5. In terms of biological role, catalyzes the reversible conversion of 2-phosphoglycerate (2-PG) into phosphoenolpyruvate (PEP). It is essential for the degradation of carbohydrates via glycolysis. This is Enolase from Leuconostoc citreum (strain KM20).